A 139-amino-acid polypeptide reads, in one-letter code: Large ribosomal subunit protein uL13 (139 aa).

This sequence belongs to the universal ribosomal protein uL13 family. Part of the 50S ribosomal subunit.

In terms of biological role, this protein is one of the early assembly proteins of the 50S ribosomal subunit, although it is not seen to bind rRNA by itself. It is important during the early stages of 50S assembly. In Wolinella succinogenes (strain ATCC 29543 / DSM 1740 / CCUG 13145 / JCM 31913 / LMG 7466 / NCTC 11488 / FDC 602W) (Vibrio succinogenes), this protein is Large ribosomal subunit protein uL13.